Here is a 317-residue protein sequence, read N- to C-terminus: NAC domain-containing protein 55 (317 aa).

The 149-residue stretch at 14-162 (LPPGFRFYPT…DWVLCRIYKK (149 aa)) folds into the NAC domain. The DNA-binding element occupies 111 to 168 (VGIKKALVFYIGKAPKGTKTNWIMHEYRLIEPSRRNGSTKLDDWVLCRIYKKQTSAQK).

Expressed in leaves.

Its subcellular location is the nucleus. Functionally, transcription factors that bind specifically to the 5'-CATGTG-3' motif. The protein is NAC domain-containing protein 55 (NAC055) of Arabidopsis thaliana (Mouse-ear cress).